The chain runs to 340 residues: Phosphoribosylformylglycinamidine cyclo-ligase (340 aa).

This sequence belongs to the AIR synthase family.

Its subcellular location is the cytoplasm. It carries out the reaction 2-formamido-N(1)-(5-O-phospho-beta-D-ribosyl)acetamidine + ATP = 5-amino-1-(5-phospho-beta-D-ribosyl)imidazole + ADP + phosphate + H(+). It functions in the pathway purine metabolism; IMP biosynthesis via de novo pathway; 5-amino-1-(5-phospho-D-ribosyl)imidazole from N(2)-formyl-N(1)-(5-phospho-D-ribosyl)glycinamide: step 2/2. The chain is Phosphoribosylformylglycinamidine cyclo-ligase from Streptococcus agalactiae serotype V (strain ATCC BAA-611 / 2603 V/R).